Here is a 316-residue protein sequence, read N- to C-terminus: DDRGK domain-containing protein 1 (316 aa).

The Lumenal portion of the chain corresponds to 1-3 (MVE). A helical membrane pass occupies residues 4–24 (LDYLFLGSVGFLTIALMLIIL). Residues 25–316 (RIIKLYFDEK…VEHVSELTAA (292 aa)) lie on the Cytoplasmic side of the membrane. The tract at residues 147–187 (LEQEKEKRLQKEREKQMEQEEEERKRKCREREEREKREEEE) is disordered.

The protein belongs to the DDRGK1 family.

The protein resides in the endoplasmic reticulum membrane. Functionally, substrate adapter for ufmylation, the covalent attachment of the ubiquitin-like modifier UFM1 to substrate proteins. In Brugia malayi (Filarial nematode worm), this protein is DDRGK domain-containing protein 1.